Consider the following 216-residue polypeptide: GTPase IMAP family member GIMD1 (216 aa).

Residues lysine 5–lysine 216 enclose the AIG1-type G domain. Residues glycine 14 to serine 22, serine 35, and histidine 147 to glutamate 149 each bind GTP.

This sequence belongs to the TRAFAC class TrmE-Era-EngA-EngB-Septin-like GTPase superfamily. AIG1/Toc34/Toc159-like paraseptin GTPase family. IAN subfamily.

In Bos taurus (Bovine), this protein is GTPase IMAP family member GIMD1 (GIMD1).